A 306-amino-acid chain; its full sequence is Probable cobalamin biosynthesis protein CobD (306 aa).

The next 5 membrane-spanning stretches (helical) occupy residues 54–74 (LFGFLNVILVLAIVFFMTYEI), 88–108 (ISIYSIILSFSIGHKSLIEFS), 155–175 (ITDSIIAPLIYAAIFGLPGAF), 215–235 (IAGMLLIISAPFYGGNIKSAI), and 286–306 (SLKAVDYSVLLFLIIYTVLLM).

Belongs to the CobD/CbiB family.

The protein localises to the cell membrane. It participates in cofactor biosynthesis; adenosylcobalamin biosynthesis. In terms of biological role, converts cobyric acid to cobinamide by the addition of aminopropanol on the F carboxylic group. This chain is Probable cobalamin biosynthesis protein CobD, found in Methanococcus maripaludis (strain C7 / ATCC BAA-1331).